Reading from the N-terminus, the 363-residue chain is G-protein coupled receptor 6 (363 aa).

The Extracellular portion of the chain corresponds to 1-75 (MNASAAALNE…SGLLLSAVNP (75 aa)). Residues Asn-2 and Asn-9 are each glycosylated (N-linked (GlcNAc...) asparagine). The interval 29-48 (GAPDTGEWGPPAASAALGGG) is disordered. Asn-52 carries N-linked (GlcNAc...) asparagine glycosylation. Residues 76–95 (WDVLLCVSGTVIAGENALVV) traverse the membrane as a helical segment. Over 96 to 107 (ALIASTPALRTP) the chain is Cytoplasmic. A helical transmembrane segment spans residues 108–131 (MFVLVGSLATADLLAGCGLILHFV). Topologically, residues 132 to 143 (FQYVVPSETVSL) are extracellular. The chain crosses the membrane as a helical span at residues 144 to 165 (LMVGFLVASFAASVSSLLAITV). At 166–186 (DRYLSLYNALTYYSRRTLLGV) the chain is on the cytoplasmic side. Residues 187–206 (HLLLAATWTVSLGLGLLPVL) traverse the membrane as a helical segment. Residues 207-231 (GWNCLADRTSCSVVRPLTRSHVALL) lie on the Extracellular side of the membrane. Residues 232 to 250 (STSFFVVFGIMLHLYVRIC) traverse the membrane as a helical segment. Residues 251–278 (QVVWRHAHQIALQQHCLAPPHLAATRKG) lie on the Cytoplasmic side of the membrane. The chain crosses the membrane as a helical span at residues 279–305 (VGTLAVVLGTFGASWLPFAIYCVVGSQ). Residues 306–310 (EDPAI) lie on the Extracellular side of the membrane. A helical transmembrane segment spans residues 311–332 (YTYATLLPATYNSMINPIIYAF). At 333 to 363 (RNQEIQRALWLLFCGCFQSKVPFRSRSPSEV) the chain is on the cytoplasmic side. A lipid anchor (S-palmitoyl cysteine) is attached at Cys-346. Ser-357, Ser-359, and Ser-361 each carry phosphoserine.

Belongs to the G-protein coupled receptor 1 family. As to expression, mainly expressed in the brain. Selectively expressed in striatopallidal neurons in the striatum.

The protein localises to the cell membrane. Orphan receptor with constitutive G(s) signaling activity that activate cyclic AMP. Promotes neurite outgrowth and blocks myelin inhibition in neurons. This chain is G-protein coupled receptor 6 (Gpr6), found in Mus musculus (Mouse).